The chain runs to 241 residues: NH(3)-dependent NAD(+) synthetase (241 aa).

Residue Gly-27–Ser-34 participates in ATP binding. Mg(2+) is bound at residue Asp-33. Arg-109 is a binding site for deamido-NAD(+). ATP is bound at residue Thr-129. Glu-134 serves as a coordination point for Mg(2+). Deamido-NAD(+) is bound by residues Lys-142 and Asp-149. ATP contacts are provided by Lys-158 and Thr-180. His-231 to Lys-232 contacts deamido-NAD(+).

It belongs to the NAD synthetase family. Homodimer.

The catalysed reaction is deamido-NAD(+) + NH4(+) + ATP = AMP + diphosphate + NAD(+) + H(+). It participates in cofactor biosynthesis; NAD(+) biosynthesis; NAD(+) from deamido-NAD(+) (ammonia route): step 1/1. Functionally, catalyzes the ATP-dependent amidation of deamido-NAD to form NAD. Uses ammonia as a nitrogen source. This chain is NH(3)-dependent NAD(+) synthetase, found in Thermoplasma acidophilum (strain ATCC 25905 / DSM 1728 / JCM 9062 / NBRC 15155 / AMRC-C165).